A 207-amino-acid chain; its full sequence is 3-demethoxyubiquinol 3-hydroxylase (207 aa).

The Fe cation site is built by Glu-56, Glu-86, His-89, Glu-138, Glu-170, and His-173.

The protein belongs to the COQ7 family. It depends on Fe cation as a cofactor.

It is found in the cell membrane. It catalyses the reaction a 5-methoxy-2-methyl-3-(all-trans-polyprenyl)benzene-1,4-diol + AH2 + O2 = a 3-demethylubiquinol + A + H2O. The protein operates within cofactor biosynthesis; ubiquinone biosynthesis. Functionally, catalyzes the hydroxylation of 2-nonaprenyl-3-methyl-6-methoxy-1,4-benzoquinol during ubiquinone biosynthesis. This Cupriavidus taiwanensis (strain DSM 17343 / BCRC 17206 / CCUG 44338 / CIP 107171 / LMG 19424 / R1) (Ralstonia taiwanensis (strain LMG 19424)) protein is 3-demethoxyubiquinol 3-hydroxylase.